A 21-amino-acid polypeptide reads, in one-letter code: Bombinin-H1/H3 (21 aa).

Residue Ile-2 is modified to D-allo-isoleucine; in form H3. Isoleucine amide is present on Ile-20.

Belongs to the bombinin family. In terms of tissue distribution, expressed by the skin glands.

The protein localises to the secreted. Has antimicrobial and hemolytic activities. The chain is Bombinin-H1/H3 from Bombina variegata (Yellow-bellied toad).